Here is a 146-residue protein sequence, read N- to C-terminus: CysO-cysteine peptidase (146 aa).

The MPN domain maps to 11 to 134 (LVIRADLVNA…LRSYRIVDGA (124 aa)). Zn(2+)-binding residues include H88, H90, and D101. Positions 88–101 (HSHTATEAYPSRTD) match the JAMM motif motif.

This sequence belongs to the peptidase M67A family. Zn(2+) serves as cofactor.

The catalysed reaction is [CysO sulfur-carrier protein]-Gly-NH-CH2-C(O)-S-L-Cys + H2O = [CysO sulfur-carrier protein]-C-terminal Gly-Gly + L-cysteine + H(+). It functions in the pathway amino-acid biosynthesis; L-cysteine biosynthesis. Protease that hydrolyzes the covalent CysO-cysteine adduct synthesized by CysM to release L-cysteine and regenerate CysO. The polypeptide is CysO-cysteine peptidase (mec) (Mycobacterium bovis (strain ATCC BAA-935 / AF2122/97)).